A 209-amino-acid polypeptide reads, in one-letter code: MSKVTVFDHPLIKHKLTILRDKNTGSNQFRQLVSEIATLMCYEVTRDFKLEDCEVETPIGKTTGQTLSGKKLGVVPILRAGLGMVEGFLSVLPAAKVGHIGLYRDPKTLKPVEYYCKLPKDVEERDIIVVDPMLATGGSAEAAITFLKEHGCKNIKLVNIIAAPEGIKMVQEKHPDVDIYVAGLDEKLNDHGYIVPGLGDAGDRLFGTK.

5-phospho-alpha-D-ribose 1-diphosphate is bound by residues arginine 79, arginine 104, and 131–139; that span reads DPMLATGGS. Residues isoleucine 194 and 199–201 contribute to the uracil site; that span reads GDA. Aspartate 200 lines the 5-phospho-alpha-D-ribose 1-diphosphate pocket.

Belongs to the UPRTase family. The cofactor is Mg(2+).

The catalysed reaction is UMP + diphosphate = 5-phospho-alpha-D-ribose 1-diphosphate + uracil. It functions in the pathway pyrimidine metabolism; UMP biosynthesis via salvage pathway; UMP from uracil: step 1/1. With respect to regulation, allosterically activated by GTP. Functionally, catalyzes the conversion of uracil and 5-phospho-alpha-D-ribose 1-diphosphate (PRPP) to UMP and diphosphate. This chain is Uracil phosphoribosyltransferase, found in Finegoldia magna (strain ATCC 29328 / DSM 20472 / WAL 2508) (Peptostreptococcus magnus).